Reading from the N-terminus, the 226-residue chain is Clarin-3 (226 aa).

The helical transmembrane segment at 8-28 (LMFLSGFLTSLGSVVVICSIL) threads the bilayer. Residue asparagine 46 is glycosylated (N-linked (GlcNAc...) asparagine). 3 helical membrane-spanning segments follow: residues 92–112 (VVIL…VFTF), 128–148 (GVYT…VLFV), and 181–201 (FWLT…IIFY).

The protein belongs to the clarin family.

The protein resides in the membrane. The protein is Clarin-3 (Clrn3) of Mus musculus (Mouse).